The chain runs to 386 residues: Protein phosphatase methylesterase 1 (386 aa).

Residues 1-38 are disordered; the sequence is MSALEKSMHLGRLPSRPPLPGSGGSQSGAKMRMGPGRK. Ser15 bears the Phosphoserine mark. Residue Arg16 is modified to Asymmetric dimethylarginine; alternate. Position 16 is an omega-N-methylarginine; alternate (Arg16). Residue Ser156 is part of the active site. The span at 255-265 shows a compositional bias: acidic residues; it reads IEEEEEDEEGS. The interval 255-280 is disordered; it reads IEEEEEDEEGSESVNKRKKEDDMETK. Positions 268–280 are enriched in basic and acidic residues; the sequence is VNKRKKEDDMETK. The active site involves His349.

It belongs to the AB hydrolase superfamily. Binds PPP2CA and PPP2CB. Phosphorylated by SIK1 following increases in intracellular sodium, leading to dissociation from the protein phosphatase 2A (PP2A) complex and subsequent dephosphorylation of sodium/potassium-transporting ATPase ATP1A1.

It catalyses the reaction [phosphatase 2A protein]-C-terminal L-leucine methyl ester + H2O = [phosphatase 2A protein]-C-terminal L-leucine + methanol + H(+). In terms of biological role, demethylates proteins that have been reversibly carboxymethylated. Demethylates PPP2CB (in vitro) and PPP2CA. Binding to PPP2CA displaces the manganese ion and inactivates the enzyme. This chain is Protein phosphatase methylesterase 1 (Ppme1), found in Rattus norvegicus (Rat).